The sequence spans 606 residues: Aspartate--tRNA(Asp/Asn) ligase (606 aa).

Position 177 (Glu177) interacts with L-aspartate. The interval 201-204 is aspartate; it reads QLFK. Arg223 is an L-aspartate binding site. Residues 223–225 and Gln232 contribute to the ATP site; that span reads RDE. L-aspartate is bound at residue His461. Glu499 serves as a coordination point for ATP. Arg506 lines the L-aspartate pocket. ATP is bound at residue 551 to 554; the sequence is GMDR.

The protein belongs to the class-II aminoacyl-tRNA synthetase family. Type 1 subfamily. In terms of assembly, homodimer.

Its subcellular location is the cytoplasm. It catalyses the reaction tRNA(Asx) + L-aspartate + ATP = L-aspartyl-tRNA(Asx) + AMP + diphosphate. Aspartyl-tRNA synthetase with relaxed tRNA specificity since it is able to aspartylate not only its cognate tRNA(Asp) but also tRNA(Asn). Reaction proceeds in two steps: L-aspartate is first activated by ATP to form Asp-AMP and then transferred to the acceptor end of tRNA(Asp/Asn). The chain is Aspartate--tRNA(Asp/Asn) ligase from Prochlorococcus marinus (strain MIT 9303).